The chain runs to 232 residues: Glutathione-specific gamma-glutamylcyclotransferase (232 aa).

10–15 provides a ligand contact to substrate; that stretch reads VLGYGS. Glutamate 115 (proton acceptor) is an active-site residue.

This sequence belongs to the gamma-glutamylcyclotransferase family. ChaC subfamily.

It is found in the cytoplasm. Its subcellular location is the nucleus. The enzyme catalyses glutathione = L-cysteinylglycine + 5-oxo-L-proline. In terms of biological role, catalyzes the cleavage of glutathione into 5-oxo-L-proline and a Cys-Gly dipeptide. Acts specifically on glutathione, but not on other gamma-glutamyl peptides. Allows utilization of gluthathione through subsequent cleavage of the Cys-Gly dipeptide by Cys-Gly metallodipeptidase DUG1. This is Glutathione-specific gamma-glutamylcyclotransferase from Saccharomyces cerevisiae (strain ATCC 204508 / S288c) (Baker's yeast).